The sequence spans 295 residues: Protease HtpX (295 aa).

2 helical membrane passes run 4-24 (ILLF…TLSL) and 41-61 (SSLL…SLFI). Residue His-147 coordinates Zn(2+). Glu-148 is a catalytic residue. Residue His-151 coordinates Zn(2+). Transmembrane regions (helical) follow at residues 158–178 (VTLA…ARII) and 199–219 (VATI…VMWF). Glu-224 contacts Zn(2+).

Belongs to the peptidase M48B family. The cofactor is Zn(2+).

It localises to the cell inner membrane. The sequence is that of Protease HtpX from Pseudomonas putida (strain GB-1).